The chain runs to 71 residues: uncharacterized protein (71 aa).

The segment at 23-71 is disordered; sequence ENEKAGQSEEYDDDDKEENKKRRRNNGRRGPPEKKKSRRGGEEQTQRII. The span at 52–71 shows a compositional bias: basic and acidic residues; it reads GPPEKKKSRRGGEEQTQRII.

This is an uncharacterized protein from Caenorhabditis elegans.